The following is a 79-amino-acid chain: Sec-independent protein translocase protein TatA (79 aa).

Residues 1-21 (MGSFSIWHWLIVLAIVVLVFG) traverse the membrane as a helical segment. Positions 43 to 79 (VKDGSTSTDTPAAAPGQVAGQTAADKTTIDVEAKQKG) are disordered. The segment covering 69 to 79 (TTIDVEAKQKG) has biased composition (basic and acidic residues).

This sequence belongs to the TatA/E family. As to quaternary structure, the Tat system comprises two distinct complexes: a TatABC complex, containing multiple copies of TatA, TatB and TatC subunits, and a separate TatA complex, containing only TatA subunits. Substrates initially bind to the TatABC complex, which probably triggers association of the separate TatA complex to form the active translocon.

The protein resides in the cell inner membrane. Functionally, part of the twin-arginine translocation (Tat) system that transports large folded proteins containing a characteristic twin-arginine motif in their signal peptide across membranes. TatA could form the protein-conducting channel of the Tat system. This chain is Sec-independent protein translocase protein TatA, found in Delftia acidovorans (strain DSM 14801 / SPH-1).